We begin with the raw amino-acid sequence, 321 residues long: Mas-related G-protein coupled receptor member D (321 aa).

Residues Met-1 to Ser-8 lie on the Extracellular side of the membrane. The N-linked (GlcNAc...) asparagine glycan is linked to Asn-2. A helical membrane pass occupies residues Pro-9–Val-29. Position 30 (Thr-30) is a topological domain, cytoplasmic. The chain crosses the membrane as a helical span at residues Phe-31–Leu-51. Topologically, residues Ser-52–Asp-72 are extracellular. A helical transmembrane segment spans residues Phe-73–Val-93. Topologically, residues Asn-94 to Val-146 are cytoplasmic. Residues Val-147–Val-167 form a helical membrane-spanning segment. Residues Gln-168–Asp-181 are Extracellular-facing. A helical transmembrane segment spans residues Ile-182–Ile-202. Over Leu-203–Arg-220 the chain is Cytoplasmic. Residues Leu-221–Ile-241 form a helical membrane-spanning segment. Over Asn-242 to Ser-260 the chain is Extracellular. A helical transmembrane segment spans residues Cys-261 to Val-281. At Gly-282 to Val-321 the chain is on the cytoplasmic side. The segment covering Arg-302–Glu-311 has biased composition (basic and acidic residues). The interval Arg-302–Val-321 is disordered. Residues Thr-312 to Val-321 show a composition bias toward polar residues.

The protein belongs to the G-protein coupled receptor 1 family. Mas subfamily. As to expression, expressed in a subset of sensory neurons that includes nociceptors. Expressed in the subclass of non-peptidergic sensory neurons that are IB4(+) and VR1(-).

It localises to the cell membrane. Its function is as follows. May regulate nociceptor function and/or development, including the sensation or modulation of pain. Functions as a specific membrane receptor for beta-alanine. The receptor couples with G-protein G(q) and G(i). This Mus musculus (Mouse) protein is Mas-related G-protein coupled receptor member D (Mrgprd).